The sequence spans 393 residues: MGYYSLTEVTAVQYAKEHGYFEKKANVVCHEIGDGNLNYVFKLDDGVKSIIIKQALPYAKVVGESWPLSIKRATIESKALQIFAKYVPEYVPVVYSHDEELAVTVIEDLSRLTITRKGLIDGEEYPLLSQHIGRFLANVLFYTSDFGLQSEEKRVLEGTFVNPDLCKITEDLVFTDPFGHYDTNDYESELQLAVDELWSDKILKLKVAQYKYKFLTRKEALIHGDLHTGSIFSSPSETKVIDPEFATYGPFGFDIGQFIANLLLNALSREEEQRGVLFFHIEKTWSYFVETFTKLWIGEGVEAYTKEKQWLPIILQNIFTDAVGFAGCELIRRTIGLAHVADLEEITNKETRIQAKKQAISLGKELIKYESKNADIQLFRTLFQQTVSGGIKA.

ATP contacts are provided by residues Asn-38, Lys-53, and 107–109; that span reads EDL. Asp-225 is a substrate binding site. Position 242 to 244 (242 to 244) interacts with ATP; the sequence is DPE. Arg-332 contributes to the substrate binding site.

It belongs to the methylthioribose kinase family. Homodimer.

The catalysed reaction is 5-(methylsulfanyl)-D-ribose + ATP = 5-(methylsulfanyl)-alpha-D-ribose 1-phosphate + ADP + H(+). The protein operates within amino-acid biosynthesis; L-methionine biosynthesis via salvage pathway; S-methyl-5-thio-alpha-D-ribose 1-phosphate from S-methyl-5'-thioadenosine (hydrolase route): step 2/2. In terms of biological role, catalyzes the phosphorylation of methylthioribose into methylthioribose-1-phosphate. The polypeptide is Methylthioribose kinase (Bacillus thuringiensis subsp. konkukian (strain 97-27)).